The chain runs to 399 residues: Bifunctional enzyme IspD/IspF (399 aa).

The tract at residues 1-235 is 2-C-methyl-D-erythritol 4-phosphate cytidylyltransferase; sequence METWALILAA…MVEQPKTTVP (235 aa). Positions 236–399 are 2-C-methyl-D-erythritol 2,4-cyclodiphosphate synthase; it reads IVGYGYDVHK…IVIVTAIRIS (164 aa). A divalent metal cation is bound by residues D242 and H244. Residues 242–244 and 275–276 contribute to the 4-CDP-2-C-methyl-D-erythritol 2-phosphate site; these read DVH and HS. H283 is an a divalent metal cation binding site. Residues 297–299, 302–306, 373–376, and F380 each bind 4-CDP-2-C-methyl-D-erythritol 2-phosphate; these read DIG, FPDSD, and TTEE.

It in the N-terminal section; belongs to the IspD/TarI cytidylyltransferase family. IspD subfamily. The protein in the C-terminal section; belongs to the IspF family. A divalent metal cation serves as cofactor.

The catalysed reaction is 2-C-methyl-D-erythritol 4-phosphate + CTP + H(+) = 4-CDP-2-C-methyl-D-erythritol + diphosphate. The enzyme catalyses 4-CDP-2-C-methyl-D-erythritol 2-phosphate = 2-C-methyl-D-erythritol 2,4-cyclic diphosphate + CMP. Its pathway is isoprenoid biosynthesis; isopentenyl diphosphate biosynthesis via DXP pathway; isopentenyl diphosphate from 1-deoxy-D-xylulose 5-phosphate: step 2/6. It functions in the pathway isoprenoid biosynthesis; isopentenyl diphosphate biosynthesis via DXP pathway; isopentenyl diphosphate from 1-deoxy-D-xylulose 5-phosphate: step 4/6. Its function is as follows. Bifunctional enzyme that catalyzes the formation of 4-diphosphocytidyl-2-C-methyl-D-erythritol from CTP and 2-C-methyl-D-erythritol 4-phosphate (MEP) (IspD), and catalyzes the conversion of 4-diphosphocytidyl-2-C-methyl-D-erythritol 2-phosphate (CDP-ME2P) to 2-C-methyl-D-erythritol 2,4-cyclodiphosphate (ME-CPP) with a corresponding release of cytidine 5-monophosphate (CMP) (IspF). In Lawsonia intracellularis (strain PHE/MN1-00), this protein is Bifunctional enzyme IspD/IspF.